Here is a 233-residue protein sequence, read N- to C-terminus: Nickel import system ATP-binding protein NikE (233 aa).

The region spanning 2-228 (IELKHVTFGY…DRHSYTKELV (227 aa)) is the ABC transporter domain. 35–42 (GESGCGKS) contributes to the ATP binding site.

It belongs to the ABC transporter superfamily. In terms of assembly, the complex is composed of two ATP-binding proteins (NikD and NikE), two transmembrane proteins (NikB and NikC) and a solute-binding protein (NikA).

Its subcellular location is the cell membrane. It catalyses the reaction Ni(2+)(out) + ATP + H2O = Ni(2+)(in) + ADP + phosphate + H(+). Part of the ABC transporter complex NikABCDE (Opp2) involved in nickel import. Probably responsible for energy coupling to the transport system. The polypeptide is Nickel import system ATP-binding protein NikE (Staphylococcus aureus (strain bovine RF122 / ET3-1)).